Reading from the N-terminus, the 585-residue chain is Cytochrome P450 monooxygenase AOL_s00215g278 (585 aa).

Cys518 contributes to the heme binding site.

Belongs to the cytochrome P450 family. The cofactor is heme.

It participates in secondary metabolite biosynthesis; terpenoid biosynthesis. Its function is as follows. Cytochrome P450 monooxygenase; part of the gene cluster that mediates the biosynthesis of sesquiterpenyl epoxy-cyclohexenoids (SECs) such as anthrobotrisins and arthrosporols, metabolites that possess a novel hybrid carbon skeleton consisting of a polyketide-derived epoxycyclohexenol combined with a terpenoid-derived monocyclic sesquiterpenol substructure (PKS-PTS hybrid). The SEC pathway plays an important role for fungal soil colonization via decreasing fungal nematode-capturing ability. Within the pathway, the cytochrome P450 monooxygenase AOL_s00215g278 plays a role in the oxygenation of the phenol moiety, most likely in the epoxy formation. The pathway begins with the biosynthesis of 6-methylsalicylic acid (6-MSA), the first precursor of the polyketide-derived epoxycyclohexenol in arthrosporols, by the polyketide synthase (PKS) AOL_s00215g283 via condensation of 1 acetate and 3 malonate units. The 6-methylsalicylic acid decarboxylase AOL_s00215g281 then catalyzes the decarboxylation of 6-methylsalicylic acid to yield m-cresol. The cytochrome P450 monooxygenase AOL_s00215g282 further oxidizes m-cresol to yield toluquinol. With the assistance of the oxidoreductase AOL_s00215g277, the polyprenyl transferase AOL_s00215g276 catalyzes the farnesylation of toluquinol to produce farnesyl hydroquinone, the hybrid precursor for biosynthesis of SECs. Farnesyl hydroquinone undergoes epoxidation and then subsequent dehydrogenation to form farnesyl epoxy-quinone, the first and simplest SEC. The cytochrome P450 monooxygenase AOL_s00215g278 and the FAD-dependent monooxygenase AOL_s00215g279 might be involved in the oxygenation of the phenol moiety, most likely in the epoxy formation. The cytochrome P450 monooxygenases AOL_s00215g274 and AOL_s00215g280 are involved in specific regional ketone reductions at respectively C-4 and C-1 of farnesyl epoxy-quinone PubMed:33823587. This Arthrobotrys oligospora (strain ATCC 24927 / CBS 115.81 / DSM 1491) (Nematode-trapping fungus) protein is Cytochrome P450 monooxygenase AOL_s00215g278.